A 161-amino-acid chain; its full sequence is AP-1 complex subunit sigma-1 (161 aa).

It belongs to the adaptor complexes small subunit family. In terms of assembly, adaptor protein complex 1 (AP-1) is a heterotetramer composed of two large adaptins (gamma-type subunit and beta-type subunit), a medium adaptin (mu-type subunit) and a small adaptin (sigma-type subunit). As to expression, expressed in seedlings, roots, stems, leaves, flowers and siliques (developing fruits and seeds).

It is found in the golgi apparatus. The protein resides in the cytoplasmic vesicle. It localises to the clathrin-coated vesicle membrane. In terms of biological role, subunit of clathrin-associated adaptor protein complex 1 that plays a role in protein sorting at the trans-Golgi network and early endosomes (TGN/EE). The AP complexes mediate the recruitment of clathrin to membranes and the recognition of sorting signals within the cytosolic tails of transmembrane cargo molecules. The sequence is that of AP-1 complex subunit sigma-1 (AAP19-1) from Arabidopsis thaliana (Mouse-ear cress).